A 297-amino-acid polypeptide reads, in one-letter code: Homoserine kinase (297 aa).

Position 82–92 (82–92 (PLTRGLGSSAS)) interacts with ATP.

Belongs to the GHMP kinase family. Homoserine kinase subfamily.

It is found in the cytoplasm. It catalyses the reaction L-homoserine + ATP = O-phospho-L-homoserine + ADP + H(+). It participates in amino-acid biosynthesis; L-threonine biosynthesis; L-threonine from L-aspartate: step 4/5. Catalyzes the ATP-dependent phosphorylation of L-homoserine to L-homoserine phosphate. The chain is Homoserine kinase from Bacillus cereus (strain ATCC 14579 / DSM 31 / CCUG 7414 / JCM 2152 / NBRC 15305 / NCIMB 9373 / NCTC 2599 / NRRL B-3711).